Reading from the N-terminus, the 102-residue chain is Small ribosomal subunit protein uS14 (102 aa).

It belongs to the universal ribosomal protein uS14 family. Part of the 30S ribosomal subunit. Contacts proteins S3 and S10.

In terms of biological role, binds 16S rRNA, required for the assembly of 30S particles and may also be responsible for determining the conformation of the 16S rRNA at the A site. The protein is Small ribosomal subunit protein uS14 of Wolbachia sp. subsp. Brugia malayi (strain TRS).